A 137-amino-acid polypeptide reads, in one-letter code: AVCVSLLGAANIPPHPLNLINFMEMIRYTIPCEKTWGEYADYGCYCGAGGSGRPIDALDRCCYVHDNCYGDAANIRDCNPKTQSYSYKLTKRTIICYGAAGTCARVVCDCDRTAALCFGDSEYIEGHKNIDTARFCQ.

Positions 1–9 (AVCVSLLGA) are cleaved as a signal peptide. The propeptide occupies 10–17 (ANIPPHPL). Intrachain disulfides connect cysteine 44-cysteine 136, cysteine 46-cysteine 62, cysteine 61-cysteine 117, cysteine 68-cysteine 110, cysteine 78-cysteine 103, and cysteine 96-cysteine 108. Residues tyrosine 45, glycine 47, and glycine 49 each contribute to the Ca(2+) site. Histidine 65 is a catalytic residue. Ca(2+) is bound at residue aspartate 66. Aspartate 111 is a catalytic residue.

It belongs to the phospholipase A2 family. Group I subfamily. D49 sub-subfamily. Heterodimer; disulfide-linked. The A chain has phospholipase A2 activity and the B chain shows homology with the basic protease inhibitors. Ca(2+) serves as cofactor. Expressed by the venom gland.

Its subcellular location is the secreted. The enzyme catalyses a 1,2-diacyl-sn-glycero-3-phosphocholine + H2O = a 1-acyl-sn-glycero-3-phosphocholine + a fatty acid + H(+). Its function is as follows. Beta bungarotoxin is a presynaptic neurotoxin. The A chain has phospholipase activity. PLA2 catalyzes the calcium-dependent hydrolysis of the 2-acyl groups in 3-sn-phosphoglycerides. This chain is Acidic phospholipase A2 beta-bungarotoxin A chain, found in Bungarus candidus (Malayan krait).